A 465-amino-acid polypeptide reads, in one-letter code: Uridine kinase-like protein 5 (465 aa).

Residues 26 to 230 form a uridine kinase region; the sequence is LKQPFVIGVA…IVQHIRTKLC (205 aa). Residues 240–465 form a uracil phosphoribosyltransferase region; sequence NIFIISSTFQ…SLSTNLKLRS (226 aa). Residues Lys264, Arg273, and 307–310 contribute to the GTP site; that span reads CKRL. Residues Arg317 and Arg342 each coordinate 5-phospho-alpha-D-ribose 1-diphosphate. Residue Arg362 coordinates GTP. 5-phospho-alpha-D-ribose 1-diphosphate-binding positions include Asp368, 373 to 376, and Glu439; that span reads SGYS. Uracil is bound at residue 438–440; it reads GEF.

In the N-terminal section; belongs to the uridine kinase family. The protein in the C-terminal section; belongs to the UPRTase family. The cofactor is Mg(2+).

The enzyme catalyses UMP + diphosphate = 5-phospho-alpha-D-ribose 1-diphosphate + uracil. It carries out the reaction cytidine + ATP = CMP + ADP + H(+). It catalyses the reaction uridine + ATP = UMP + ADP + H(+). It participates in pyrimidine metabolism; UMP biosynthesis via salvage pathway; UMP from uracil: step 1/1. The protein operates within pyrimidine metabolism; CTP biosynthesis via salvage pathway; CTP from cytidine: step 1/3. It functions in the pathway pyrimidine metabolism; UMP biosynthesis via salvage pathway; UMP from uridine: step 1/1. With respect to regulation, allosterically activated by GTP. Its function is as follows. Involved in the pyrimidine salvage pathway. The protein is Uridine kinase-like protein 5 (UKL5) of Arabidopsis thaliana (Mouse-ear cress).